Consider the following 90-residue polypeptide: Co-chaperonin GroES (90 aa).

The protein belongs to the GroES chaperonin family. In terms of assembly, heptamer of 7 subunits arranged in a ring. Interacts with the chaperonin GroEL.

Its subcellular location is the cytoplasm. In terms of biological role, together with the chaperonin GroEL, plays an essential role in assisting protein folding. The GroEL-GroES system forms a nano-cage that allows encapsulation of the non-native substrate proteins and provides a physical environment optimized to promote and accelerate protein folding. GroES binds to the apical surface of the GroEL ring, thereby capping the opening of the GroEL channel. This is Co-chaperonin GroES from Borreliella burgdorferi (strain ATCC 35210 / DSM 4680 / CIP 102532 / B31) (Borrelia burgdorferi).